Consider the following 272-residue polypeptide: Probable prolyl 4-hydroxylase 11 (272 aa).

Residues 1-55 (MSKSTSVSTILYLRQRLQGLKIYETSDLIQHINTFDELVGEQVSVDVKIEEKTKD) are Cytoplasmic-facing. The chain crosses the membrane as a helical; Signal-anchor for type II membrane protein span at residues 56-80 (MILLCSLSPLLTTLTCSMVKVAASL). Residues 81–272 (RFPNERWLEV…KRHCLSLNLF (192 aa)) are Lumenal-facing. The 94-residue stretch at 179 to 272 (NGETLQVINY…KRHCLSLNLF (94 aa)) folds into the Fe2OG dioxygenase domain. His-197, Asp-199, and His-261 together coordinate Fe cation.

Belongs to the P4HA family. Requires Fe(2+) as cofactor. It depends on L-ascorbate as a cofactor.

The protein localises to the endoplasmic reticulum membrane. The enzyme catalyses L-prolyl-[collagen] + 2-oxoglutarate + O2 = trans-4-hydroxy-L-prolyl-[collagen] + succinate + CO2. Functionally, catalyzes the post-translational formation of 4-hydroxyproline in -Xaa-Pro-Gly- sequences in proline-rich peptide sequences of plant glycoproteins and other proteins. Hydroxyprolines are important constituent of many plant cell wall glycoproteins such as extensins, hydroxyproline-rich glycoproteins, lectins and arabinogalactan proteins. The chain is Probable prolyl 4-hydroxylase 11 from Arabidopsis thaliana (Mouse-ear cress).